The following is a 315-amino-acid chain: Cysteine proteinase 2 (315 aa).

The first 13 residues, 1–13, serve as a signal peptide directing secretion; it reads MFAFICLLAIASA. Positions 14–93 are cleaved as a propeptide — activation peptide; it reads IDFNTWASKN…NGQVKYLNIQ (80 aa). 2 disulfides stabilise this stretch: Cys115–Cys161 and Cys152–Cys193. Cys118 is a catalytic residue. Active-site residues include His259 and Asn279.

Belongs to the peptidase C1 family. Interacts with cysteine protease inhibitor ICP1. Interacts with cysteine protease inhibitor ICP2.

The protein resides in the cell membrane. Its subcellular location is the cytoplasmic vesicle. The protein localises to the phagosome. It localises to the secreted. It carries out the reaction Hydrolysis of proteins, including basement membrane collagen and azocasein. Preferential cleavage: Arg-Arg-|-Xaa in small molecule substrates including Z-Arg-Arg-|-NHMec.. Inhibited by cysteine protease inhibitors ICP1 and ICP2. Inhibited by leupeptin and such inhibitors of cysteine proteinases as L-transepoxysuccinyl-L-leucylamido-(4-guanidino)butane, peptidyldiazomethanes, iodoacetic acid and chicken cystatin. Cysteine protease which degrades matrix proteins such as collagen, laminin and fibronectin and thus is involved in the destruction of human tissue. Can abolish adhesion. May play an important role in pathogenicity. This is Cysteine proteinase 2 from Entamoeba histolytica (strain ATCC 30459 / HM-1:IMSS / ABRM).